The chain runs to 700 residues: Myotubularin-related protein 11 (700 aa).

The tract at residues 1–39 (MWWGGRGQSFNIAPQKEEPEMGLSGPKSNPGNRMPEPSS) is disordered. The Myotubularin phosphatase domain occupies 201-644 (LETLEDWETE…PQIRFWKRCY (444 aa)).

The protein belongs to the protein-tyrosine phosphatase family. Non-receptor class myotubularin subfamily.

The chain is Myotubularin-related protein 11 (Mtmr11) from Mus musculus (Mouse).